Reading from the N-terminus, the 77-residue chain is Conotoxin Bt6.6 (77 aa).

An N-terminal signal peptide occupies residues 1-19 (MEKLTILLLVAAVLMSTQA). The propeptide occupies 20-38 (LIQSDGEKRQQAKINFLSX). 3 cysteine pairs are disulfide-bonded: Cys-51-Cys-65, Cys-58-Cys-69, and Cys-64-Cys-74.

The protein belongs to the conotoxin O2 superfamily. As to expression, expressed by the venom duct.

It is found in the secreted. The sequence is that of Conotoxin Bt6.6 from Conus betulinus (Beech cone).